We begin with the raw amino-acid sequence, 317 residues long: Putative cuticle collagen 80 (317 aa).

Positions 80 to 262 (CNCGPQASNC…GAPGNDGAPG (183 aa)) are disordered. 3 triple-helical region regions span residues 92–124 (GPPGPPGASGDRGLDGQPGPAGKPGQPGVAGPA), 137–199 (GAPG…SGQR), and 202–264 (GLPG…PGSD). 3 stretches are compositionally biased toward low complexity: residues 108–124 (QPGPAGKPGQPGVAGPA), 135–145 (PQGAPGPAGAP), and 175–206 (AGDAGSPGQAGAPGNPGRPGQSGQRSRGLPGP). 2 stretches are compositionally biased toward pro residues: residues 207–219 (SGRPGPQGPPGAP) and 230–240 (PAGPPGPPGPN). The span at 242–262 (QPGHPGQDGQPGAPGNDGAPG) shows a compositional bias: low complexity.

It belongs to the cuticular collagen family. In terms of assembly, collagen polypeptide chains are complexed within the cuticle by disulfide bonds and other types of covalent cross-links.

In terms of biological role, nematode cuticles are composed largely of collagen-like proteins. The cuticle functions both as an exoskeleton and as a barrier to protect the worm from its environment. The chain is Putative cuticle collagen 80 (col-80) from Caenorhabditis elegans.